We begin with the raw amino-acid sequence, 67 residues long: Large ribosomal subunit protein uL29 (67 aa).

It belongs to the universal ribosomal protein uL29 family.

This Magnetococcus marinus (strain ATCC BAA-1437 / JCM 17883 / MC-1) protein is Large ribosomal subunit protein uL29.